The chain runs to 396 residues: Alpha-1-antitrypsin (396 aa).

Positions 1 to 2 (HV) are cleaved as a signal peptide. Residues 1-24 (HVEDPQGDAAQKTDTSHHDQEHST) are disordered. The span at 14–24 (DTSHHDQEHST) shows a compositional bias: basic and acidic residues. Serine 16 is modified (phosphoserine). Residues asparagine 48, asparagine 85, asparagine 123, and asparagine 249 are each glycosylated (N-linked (GlcNAc...) asparagine). Positions 351-370 (GAMFLEAIPMSIPPEVKFNK) are RCL. Serine 361 carries the phosphoserine modification.

Belongs to the serpin family. As to quaternary structure, interacts with CELA2A. Interacts with ERGIC3 and LMAN1/ERGIC53. Interacts with PRSS1/Trypsin. As to expression, plasma.

The protein localises to the secreted. Its function is as follows. Inhibitor of serine proteases. Its primary target is elastase, but it also has a moderate affinity for plasmin and thrombin. Inhibits trypsin, chymotrypsin and plasminogen activator. The sequence is that of Alpha-1-antitrypsin (SERPINA1) from Chlorocebus aethiops (Green monkey).